A 500-amino-acid polypeptide reads, in one-letter code: Na(+)/H(+) antiporter NhaB (500 aa).

12 helical membrane passes run 28–50 (FLMLNALVLWSVGPVAAGWLLVI), 58–78 (MALKCYPLMPGGLLLIEALLL), 96–116 (VILLLMFMVAGIYFMKDLLLF), 129–149 (ALLALMFCFLSAFLSAFLDAL), 150–170 (TVTAVIISAAVGFYSVYHRVA), 205–225 (LLMHGAVGTALGGVCTLVGEP), 241–261 (FFLKVAPVSLPVLVAGLVTCL), 311–331 (ILIAGLAFHIAEVGLIGLMVI), 350–370 (FKDAMPFTALLVVFFAVVAVI), 394–414 (MLFIANGLLSAISDNVFVATI), 449–469 (VATPNGQAAFLFLLTSAIAPL), and 477–497 (MVWMALPYTVVMGLLGWYAVS).

It belongs to the NhaB Na(+)/H(+) (TC 2.A.34) antiporter family.

It is found in the cell inner membrane. The enzyme catalyses 2 Na(+)(in) + 3 H(+)(out) = 2 Na(+)(out) + 3 H(+)(in). Its function is as follows. Na(+)/H(+) antiporter that extrudes sodium in exchange for external protons. The protein is Na(+)/H(+) antiporter NhaB of Pseudomonas fluorescens (strain Pf0-1).